The following is a 279-amino-acid chain: GATA transcription factor 15 (279 aa).

Residues 52-94 (AYDDHSTVTTSPSSPSSSSTGSVDCTLSLGTPSSRRAEPVAAA) are disordered. The segment covering 58-74 (TVTTSPSSPSSSSTGSV) has biased composition (low complexity). The GATA-type zinc-finger motif lies at 154–179 (CANCGTASTPLWRNGPRGPKSLCNAC).

The protein belongs to the type IV zinc-finger family. Class B subfamily. In terms of tissue distribution, highly expressed in inflorescences. Expressed in vascular bundles of root stele within the elongation zones, of elongating upper internodes and of the junctions of leaf blades and sheaths.

In terms of biological role, probable transcription factor that regulates organogenesis during transition from the vegetative to the reproductive phase. Regulates the expression of CYP78A11/PLA1, HD3A and MADS1 during reproductive development in rice. May act upstream of CYP78A11/PLA1 during panicle development. Acts independently of the photoperiodic and gibberellin signaling pathways. The protein is GATA transcription factor 15 of Oryza sativa subsp. japonica (Rice).